The primary structure comprises 296 residues: Probable endonuclease 4 (296 aa).

9 residues coordinate Zn(2+): His-68, His-109, Glu-144, Asp-178, His-181, His-213, Asp-226, His-228, and Glu-258.

It belongs to the AP endonuclease 2 family. Requires Zn(2+) as cofactor.

It carries out the reaction Endonucleolytic cleavage to 5'-phosphooligonucleotide end-products.. Endonuclease IV plays a role in DNA repair. It cleaves phosphodiester bonds at apurinic or apyrimidinic (AP) sites, generating a 3'-hydroxyl group and a 5'-terminal sugar phosphate. This is Probable endonuclease 4 from Pediococcus pentosaceus (strain ATCC 25745 / CCUG 21536 / LMG 10740 / 183-1w).